Reading from the N-terminus, the 116-residue chain is Large ribosomal subunit protein bL19 (116 aa).

It belongs to the bacterial ribosomal protein bL19 family.

In terms of biological role, this protein is located at the 30S-50S ribosomal subunit interface and may play a role in the structure and function of the aminoacyl-tRNA binding site. This Actinobacillus pleuropneumoniae serotype 5b (strain L20) protein is Large ribosomal subunit protein bL19.